The sequence spans 161 residues: Glycine/sarcosine/betaine reductase complex component A2 (161 aa).

Residue Sec42 is part of the active site. Sec42 is a non-standard amino acid (selenocysteine).

Belongs to the GrdA family. In terms of assembly, monomer. Component of the glycine, sarcosine and betaine reductase complexes, together with components B and C.

It carries out the reaction acetyl phosphate + [thioredoxin]-disulfide + NH4(+) + H2O = [thioredoxin]-dithiol + glycine + phosphate + H(+). The catalysed reaction is acetyl phosphate + methylamine + [thioredoxin]-disulfide + H2O = sarcosine + [thioredoxin]-dithiol + phosphate + H(+). It catalyses the reaction acetyl phosphate + trimethylamine + [thioredoxin]-disulfide + H2O = glycine betaine + [thioredoxin]-dithiol + phosphate + H(+). In terms of biological role, in the first step of glycine, betaine and sarcosine reductases, the substrate is bound to component PB via a Schiff base intermediate. Then the PB-activated substrate is nucleophilically attacked by the selenol anion of component PA to transform it to a carboxymethylated selenoether and the respective amine. By action of component PC, acetyl phosphate is formed, leaving component PA in its oxidized state. Finally component PA becomes reduced by the thioredoxin system to start a new catalytic cycle of reductive deamination. This Photobacterium profundum (strain SS9) protein is Glycine/sarcosine/betaine reductase complex component A2 (grdA2).